We begin with the raw amino-acid sequence, 432 residues long: Neuronal pentraxin-1 (432 aa).

A signal peptide spans 1-22 (MLAGRAARTCALLALCLLGSGA). The disordered stretch occupies residues 88–122 (RCESQSTLDSGPGEARSGGGRKQPGSGKNTMGDLS). 2 N-linked (GlcNAc...) asparagine glycosylation sites follow: Asn154 and Asn193. In terms of domain architecture, Pentraxin (PTX) spans 226–428 (DKFQLTFPLR…GATKWTFEAC (203 aa)). Residues Cys256 and Cys316 are joined by a disulfide bond. Asn280, Glu358, Gln359, Asp360, and Gln370 together coordinate Ca(2+).

In terms of assembly, homooligomer or heterooligomer (probably pentamer) with neuronal pentraxin receptor (NPTXR). The cofactor is Ca(2+). As to expression, expressed in brain and kidney.

The protein resides in the secreted. It is found in the cytoplasmic vesicle. It localises to the secretory vesicle. Its subcellular location is the endoplasmic reticulum. In terms of biological role, may be involved in mediating uptake of synaptic material during synapse remodeling or in mediating the synaptic clustering of AMPA glutamate receptors at a subset of excitatory synapses. This Mus musculus (Mouse) protein is Neuronal pentraxin-1 (Nptx1).